A 609-amino-acid chain; its full sequence is MSDNPPRMEVCPYCKKPFKRLKSHLPYCKMIGPTIPTDQKVYQSKPATLPRAKKMKGPIKDLIKAKGKELETENEERNSKLVVDKPEQTVKTFPLPAVGLERAATTKADKDIKNPIQPSFKMLKNTKPMTTFQEETKAQFYASEKTSPKRELAKDLPKSGESRCNPSEAGASLLVGSIEPSLSNQDRKYSSTLPNDVQTTSGDLKLDKIDPQRQELLVKLLDVPTGDCHISPKNVSDGVKRVRTLLSNERDSKGRDHLSGVPTDVTVTETPEKNTESLILSLKMSSLGKIQVMEKQEKGLTLGVETCGSKGNAEKSMSATEKQERTVMSHGCENFNTRDSVTGKESQGERPHLSLFIPRETTYQFHSVSQSSSQSLASLATTFLQEKKAEAQNHHCVPDVKALMESPEGQLSLEPKSDSQFQASHTGCQSPLCSAQRHTPQSPFTNHAAAAGRKTLRSCMGLEWFPELYPGYLGLGVLPGKPQCWNAMTQKPQLISPQGERLSQVSLLERSSTHIRSLEPPAGLTTSNFSLMRLLGAVQKGWIRCNTTIRKSGFGGITMLFTGYFVLCCSWSFRRLKKLCRPLPWKSTVPPCIGVAKTTGDCRSKTCLD.

Residues 1 to 552 (MSDNPPRMEV…IRCNTTIRKS (552 aa)) lie on the Mitochondrial matrix side of the membrane. 3 disordered regions span residues 142–168 (ASEKTSPKRELAKDLPKSGESRCNPSE), 183–202 (SNQDRKYSSTLPNDVQTTSG), and 410–441 (QLSLEPKSDSQFQASHTGCQSPLCSAQRHTPQ). Residues 146-161 (TSPKRELAKDLPKSGE) are compositionally biased toward basic and acidic residues. The segment covering 418–441 (DSQFQASHTGCQSPLCSAQRHTPQ) has biased composition (polar residues). Residues 553–573 (GFGGITMLFTGYFVLCCSWSF) form a helical membrane-spanning segment. Over 574 to 609 (RRLKKLCRPLPWKSTVPPCIGVAKTTGDCRSKTCLD) the chain is Mitochondrial intermembrane.

The protein resides in the mitochondrion inner membrane. It is found in the mitochondrion matrix. The protein localises to the mitochondrion nucleoid. Critical regulator of mitochondrial DNA (mtDNA) abundance. Binds dsDNA throughout the mitochondrial genome without sequence specificity and controls mtDNA copy number by promoting its replication. Also plays important roles in mitochondrial metabolism and cell proliferation. The polypeptide is Mitochondrial nucleoid-associated protein 1 (Homo sapiens (Human)).